The following is a 138-amino-acid chain: Transcription antitermination protein NusB (138 aa).

It belongs to the NusB family.

Its function is as follows. Involved in transcription antitermination. Required for transcription of ribosomal RNA (rRNA) genes. Binds specifically to the boxA antiterminator sequence of the ribosomal RNA (rrn) operons. This is Transcription antitermination protein NusB from Helicobacter pylori (strain G27).